The following is a 332-amino-acid chain: DNA double-strand break repair nuclease NurA (332 aa).

2 residues coordinate Mn(2+): Asp-57 and Asp-132.

Belongs to the NurA family. The cofactor is Mn(2+).

Functionally, involved in DNA double-strand break (DSB) repair. Probably acts with HerA to stimulate resection of the 5' strand and produce the long 3' single-strand that is required for RadA loading. Exhibits both single-stranded endonuclease activity and 5'-3' exonuclease activity on single-stranded and double-stranded DNA. This chain is DNA double-strand break repair nuclease NurA, found in Sulfolobus acidocaldarius (strain ATCC 33909 / DSM 639 / JCM 8929 / NBRC 15157 / NCIMB 11770).